Here is a 725-residue protein sequence, read N- to C-terminus: Catalase B (725 aa).

Positions 1 to 15 (MRALSLASLIGIASA) are cleaved as a signal peptide. The propeptide occupies 16 to 27 (ACPYMTGELERR). An N-linked (GlcNAc...) asparagine glycan is attached at N50. Residue H101 is part of the active site. A glycan (N-linked (GlcNAc...) asparagine) is linked at N119. Residue N174 is part of the active site. Residue Y388 participates in heme binding. N-linked (GlcNAc...) asparagine glycans are attached at residues N447, N550, and N645.

It belongs to the catalase family. Homotetramer. Heme serves as cofactor.

The protein localises to the secreted. The catalysed reaction is 2 H2O2 = O2 + 2 H2O. Functionally, occurs in almost all aerobically respiring organisms and serves to protect cells from the toxic effects of hydrogen peroxide through its degradation into water and oxygen. This Aspergillus oryzae (strain ATCC 42149 / RIB 40) (Yellow koji mold) protein is Catalase B (catB).